Consider the following 334-residue polypeptide: Holliday junction branch migration complex subunit RuvB (334 aa).

The tract at residues 4 to 186 is large ATPase domain (RuvB-L); it reads ADRLIAPENP…FGITQRLEYY (183 aa). Residues Ile-25, Arg-26, Gly-67, Lys-70, Thr-71, Thr-72, 133-135, Arg-176, Tyr-186, and Arg-223 each bind ATP; that span reads EDY. Thr-71 provides a ligand contact to Mg(2+). A small ATPAse domain (RuvB-S) region spans residues 187–257; sequence KIPDLQNIVQ…TADKALNMLD (71 aa). The head domain (RuvB-H) stretch occupies residues 260–334; sequence SKGFDYMDRK…RAYLHFGIEK (75 aa). Arg-315 and Arg-320 together coordinate DNA.

This sequence belongs to the RuvB family. In terms of assembly, homohexamer. Forms an RuvA(8)-RuvB(12)-Holliday junction (HJ) complex. HJ DNA is sandwiched between 2 RuvA tetramers; dsDNA enters through RuvA and exits via RuvB. An RuvB hexamer assembles on each DNA strand where it exits the tetramer. Each RuvB hexamer is contacted by two RuvA subunits (via domain III) on 2 adjacent RuvB subunits; this complex drives branch migration. In the full resolvosome a probable DNA-RuvA(4)-RuvB(12)-RuvC(2) complex forms which resolves the HJ.

The protein resides in the cytoplasm. It carries out the reaction ATP + H2O = ADP + phosphate + H(+). Its function is as follows. The RuvA-RuvB-RuvC complex processes Holliday junction (HJ) DNA during genetic recombination and DNA repair, while the RuvA-RuvB complex plays an important role in the rescue of blocked DNA replication forks via replication fork reversal (RFR). RuvA specifically binds to HJ cruciform DNA, conferring on it an open structure. The RuvB hexamer acts as an ATP-dependent pump, pulling dsDNA into and through the RuvAB complex. RuvB forms 2 homohexamers on either side of HJ DNA bound by 1 or 2 RuvA tetramers; 4 subunits per hexamer contact DNA at a time. Coordinated motions by a converter formed by DNA-disengaged RuvB subunits stimulates ATP hydrolysis and nucleotide exchange. Immobilization of the converter enables RuvB to convert the ATP-contained energy into a lever motion, pulling 2 nucleotides of DNA out of the RuvA tetramer per ATP hydrolyzed, thus driving DNA branch migration. The RuvB motors rotate together with the DNA substrate, which together with the progressing nucleotide cycle form the mechanistic basis for DNA recombination by continuous HJ branch migration. Branch migration allows RuvC to scan DNA until it finds its consensus sequence, where it cleaves and resolves cruciform DNA. In Vibrio vulnificus (strain YJ016), this protein is Holliday junction branch migration complex subunit RuvB.